Reading from the N-terminus, the 285-residue chain is Pantothenate synthetase (285 aa).

30–37 contacts ATP; that stretch reads MGFLHEGH. The active-site Proton donor is H37. Q61 serves as a coordination point for (R)-pantoate. Q61 provides a ligand contact to beta-alanine. Residue 147-150 participates in ATP binding; sequence GQKD. (R)-pantoate is bound at residue Q153. Residues V176 and 184-187 each bind ATP; that span reads KSSR.

It belongs to the pantothenate synthetase family. As to quaternary structure, homodimer.

The protein localises to the cytoplasm. It carries out the reaction (R)-pantoate + beta-alanine + ATP = (R)-pantothenate + AMP + diphosphate + H(+). The protein operates within cofactor biosynthesis; (R)-pantothenate biosynthesis; (R)-pantothenate from (R)-pantoate and beta-alanine: step 1/1. Catalyzes the condensation of pantoate with beta-alanine in an ATP-dependent reaction via a pantoyl-adenylate intermediate. The protein is Pantothenate synthetase of Listeria welshimeri serovar 6b (strain ATCC 35897 / DSM 20650 / CCUG 15529 / CIP 8149 / NCTC 11857 / SLCC 5334 / V8).